Reading from the N-terminus, the 349-residue chain is DNA replication and repair protein RecF (349 aa).

30-37 is a binding site for ATP; sequence GKNGSGKT.

Belongs to the RecF family.

It localises to the cytoplasm. Functionally, the RecF protein is involved in DNA metabolism; it is required for DNA replication and normal SOS inducibility. RecF binds preferentially to single-stranded, linear DNA. It also seems to bind ATP. This is DNA replication and repair protein RecF from Francisella tularensis subsp. mediasiatica (strain FSC147).